Consider the following 184-residue polypeptide: ATP synthase subunit delta (184 aa).

It belongs to the ATPase delta chain family. F-type ATPases have 2 components, F(1) - the catalytic core - and F(0) - the membrane proton channel. F(1) has five subunits: alpha(3), beta(3), gamma(1), delta(1), epsilon(1). F(0) has three main subunits: a(1), b(2) and c(10-14). The alpha and beta chains form an alternating ring which encloses part of the gamma chain. F(1) is attached to F(0) by a central stalk formed by the gamma and epsilon chains, while a peripheral stalk is formed by the delta and b chains.

The protein resides in the cell inner membrane. F(1)F(0) ATP synthase produces ATP from ADP in the presence of a proton or sodium gradient. F-type ATPases consist of two structural domains, F(1) containing the extramembraneous catalytic core and F(0) containing the membrane proton channel, linked together by a central stalk and a peripheral stalk. During catalysis, ATP synthesis in the catalytic domain of F(1) is coupled via a rotary mechanism of the central stalk subunits to proton translocation. Its function is as follows. This protein is part of the stalk that links CF(0) to CF(1). It either transmits conformational changes from CF(0) to CF(1) or is implicated in proton conduction. The chain is ATP synthase subunit delta from Phenylobacterium zucineum (strain HLK1).